Here is a 216-residue protein sequence, read N- to C-terminus: 3-isopropylmalate dehydratase small subunit 2 (216 aa).

The protein belongs to the LeuD family. LeuD type 1 subfamily. Heterodimer of LeuC and LeuD.

It catalyses the reaction (2R,3S)-3-isopropylmalate = (2S)-2-isopropylmalate. It functions in the pathway amino-acid biosynthesis; L-leucine biosynthesis; L-leucine from 3-methyl-2-oxobutanoate: step 2/4. Its function is as follows. Catalyzes the isomerization between 2-isopropylmalate and 3-isopropylmalate, via the formation of 2-isopropylmaleate. The protein is 3-isopropylmalate dehydratase small subunit 2 of Bordetella pertussis (strain Tohama I / ATCC BAA-589 / NCTC 13251).